The primary structure comprises 718 residues: Pentatricopeptide repeat-containing protein At1g22960, mitochondrial (718 aa).

A mitochondrion-targeting transit peptide spans 1-11 (MILCLRLCLRA). 15 PPR repeats span residues 167–201 (ALKLLDLLLWVYTKKSMAEKFLLSFEKMIRKGFLP), 202–236 (SVRNCNIVLKVLRDSRMMNKASAVYETMIEHGIMP), 237–271 (TVITFNTMLDSCFKAGDLERVDKIWLEMKRRNIEF), 272–306 (SEVTYNILINGFSKNGKMEEARRFHGDMRRSGFAV), 307–341 (TPYSFNPLIEGYCKQGLFDDAWGVTDEMLNAGIYP), 342–372 (TTSTYNIYICALCDFGRIDDARELLSSMAAP), 373–407 (DVVSYNTLMHGYIKMGKFVEASLLFDDLRAGDIHP), 408–442 (SIVTYNTLIDGLCESGNLEGAQRLKEEMTTQLIFP), 443–477 (DVITYTTLVKGFVKNGNLSMATEVYDEMLRKGIKP), 478–512 (DGYAYTTRAVGELRLGDSDKAFRLHEEMVATDHHA), 514–548 (DLTIYNVRIDGLCKVGNLVKAIEFQRKIFRVGLVP), 549–583 (DHVTYTTVIRGYLENGQFKMARNLYDEMLRKRLYP), 584–618 (SVITYFVLIYGHAKAGRLEQAFQYSTEMKKRGVRP), 619–653 (NVMTHNALLYGMCKAGNIDEAYRYLCKMEEEGIPP), and 654–688 (NKYSYTMLISKNCDFEKWEEVVKLYKEMLDKEIEP).

This sequence belongs to the PPR family. P subfamily.

It is found in the mitochondrion. In Arabidopsis thaliana (Mouse-ear cress), this protein is Pentatricopeptide repeat-containing protein At1g22960, mitochondrial.